The sequence spans 274 residues: Large ribosomal subunit protein uL2cz/uL2cy (274 aa).

Residues 224–252 (NPVDHPHGGGEGRAPIGRKKPVTPWGYPA) are disordered.

It belongs to the universal ribosomal protein uL2 family. As to quaternary structure, part of the 50S ribosomal subunit.

It is found in the plastid. The protein localises to the chloroplast. The polypeptide is Large ribosomal subunit protein uL2cz/uL2cy (rpl2-A) (Capsella bursa-pastoris (Shepherd's purse)).